Consider the following 64-residue polypeptide: uncharacterized protein (64 aa).

Residues 15-37 (VVVPRFVRFIVYVVLFTVAVQRV) traverse the membrane as a helical segment.

This sequence belongs to the HHV-5 US34A protein family.

The protein localises to the host membrane. This is an uncharacterized protein from Homo sapiens (Human).